We begin with the raw amino-acid sequence, 114 residues long: U17-barytoxin-Tl1a (114 aa).

A signal peptide spans 1-20; sequence MKTIIVFLSLLVLATKFGDA. The propeptide occupies 21-74; that stretch reads NEGVNQEQMKEVIQNEFREDFLNEMAAMSLLQQLEAIESTLLEKEADRNSRQKR. Cystine bridges form between cysteine 75–cysteine 88, cysteine 82–cysteine 93, and cysteine 87–cysteine 108.

Belongs to the neurotoxin 14 (magi-1) family. 03 (ICK-30-40) subfamily. As to expression, expressed by the venom gland.

The protein resides in the secreted. In terms of biological role, ion channel inhibitor. The chain is U17-barytoxin-Tl1a from Trittame loki (Brush-footed trapdoor spider).